Consider the following 687-residue polypeptide: T-box transcription factor TBX2b (687 aa).

Positions 103-276 (LWDQFHKLGT…NNPFAKGFRD (174 aa)) form a DNA-binding region, T-box. 2 disordered regions span residues 303-452 (DRDG…ESPS) and 611-687 (NLLT…DSPK). Composition is skewed to basic and acidic residues over residues 338–357 (GSRDDKTCTDSEHEMDHQND), 375–400 (SRSEDWGREKPIAEKKDDYPDSRKTS), and 408–430 (NLEKDKLESRSRKDTDSSKKDTE). Polar residues-rich tracts occupy residues 431 to 451 (NSGISGSKDSFSPLMVQTESP), 611 to 630 (NLLTTGLPSGLNPSSESSKC), and 644 to 654 (GASQRNGSPKT). A coiled-coil region spans residues 654-681 (TTMKESINELQNIQRLVSGLESQRETSS). Positions 675–687 (SQRETSSPRDSPK) are enriched in basic and acidic residues.

In terms of assembly, binds DNA as a monomer. Expressed in the axial mesoderm, notably, in the notochordal precursor cells immediately before formation of the notochord and in the chordoneural hinge of the tail bud, after the notochord is formed. In addition, its expression is detected in the ventral forebrain, sensory neurons, fin buds and excretory system.

The protein localises to the nucleus. In terms of biological role, transcription factor which acts as a transcriptional repressor. May also function as a transcriptional activator. Binds to the palindromic T site 5'-TTCACACCTAGGTGTGAA-3' DNA sequence, or a half-site, which are present in the regulatory region of several genes. Involved in the transcriptional regulation of genes required for mesoderm differentiation. Plays a role in the specification of late notochordal precursor cells and formation of the differentiated notochord. Required for cardiac atrioventricular canal formation. The chain is T-box transcription factor TBX2b (tbx2b) from Danio rerio (Zebrafish).